We begin with the raw amino-acid sequence, 345 residues long: Neuropeptide receptor 15 (345 aa).

Topologically, residues 1–11 are extracellular; sequence MSVAVGIPYVC. A helical transmembrane segment spans residues 12-32; sequence FFIILSVVGIIGNVIVIYAIA. Over 33 to 40 the chain is Cytoplasmic; that stretch reads GDRNMRKS. A helical transmembrane segment spans residues 41 to 61; that stretch reads VMNILLLNLAVADLANLIFTI. Over 62–90 the chain is Extracellular; that stretch reads PEWIPPVFFGSTDWLFPSFLCPVCRYLEC. Cysteine 82 and cysteine 171 are oxidised to a cystine. Residues 91–111 form a helical membrane-spanning segment; sequence VFLFASISTQMIVCIERYIAI. Residues 112-125 lie on the Cytoplasmic side of the membrane; the sequence is VLPMQARQLCSRRN. A helical transmembrane segment spans residues 126–146; the sequence is VLITVLVDWIFVACFASPYAV. The Extracellular portion of the chain corresponds to 147–187; sequence WHSVKTKDRNTNSLRFKLFQLSATCSNTVGKSTWWQGYKLT. A helical transmembrane segment spans residues 188–208; it reads EFLAFYFVPCFIITVVYTKVA. Topologically, residues 209 to 246 are cytoplasmic; that stretch reads KCLWCKDPTLQCETRSCLDNKSSSRSSDALRTRRNVVK. A helical transmembrane segment spans residues 247-267; that stretch reads MLIACVAVYFVCYSPIQVIFL. Topologically, residues 268–281 are extracellular; the sequence is SKAVLNVTIHPPYD. Residues 282-304 form a helical membrane-spanning segment; sequence FILLMNALAMTCSASNPLLYTLF. Over 305–345 the chain is Cytoplasmic; it reads SQKFRRRLRDVLYCPSDVENETKTYYSINNTSIVGPRASFN.

It belongs to the G-protein coupled receptor 1 family. Expressed in pharyngeal muscle and AWC, ASG, ASE, ASI, and ASJ sensory neurons. Expressed in ASI neuron. Expressed in AFD neurons and in AVK interneuron.

The protein resides in the cell membrane. Functionally, probable receptor for neuropeptide ligand nlp-8 that plays a role in octopamine signaling and specifically, the octopamine inhibition of aversion responses in olfactory sensory neurons. Plays a crucial role in daf-7 expression. Acts in concert with gpa-4 to activate TGF-beta-like daf-7 secretion in the ASI neuron, thereby promoting larval development and inhibition of dauer diapause. Suppresses immune response against pathogenic infection by inhibiting transcription regulators elt-2 and hlh-30 in ASJ neuron. Promotes pathogen avoidance behavior via intestinal gon-2, independent of aerotaxis. In Caenorhabditis elegans, this protein is Neuropeptide receptor 15 (npr-15).